The following is a 127-amino-acid chain: MSANTEAQGSGRGLEAMKWVVVVALLLVAIVGNYLYRDIMLPLRALAVVILIAAAGGVALLTTKGKATVAFAREARTEVRKVIWPTRQETLHTTLIVAAVTAVMSLILWGLDGILVRLVSFITGLRF.

Over 1 to 19 (MSANTEAQGSGRGLEAMKW) the chain is Cytoplasmic. The helical transmembrane segment at 20-32 (VVVVALLLVAIVG) threads the bilayer. Residues 33-48 (NYLYRDIMLPLRALAV) are Periplasmic-facing. Residues 49–60 (VILIAAAGGVAL) form a helical membrane-spanning segment. Residues 61–97 (LTTKGKATVAFAREARTEVRKVIWPTRQETLHTTLIV) lie on the Cytoplasmic side of the membrane. A helical transmembrane segment spans residues 98-115 (AAVTAVMSLILWGLDGIL). At 116–127 (VRLVSFITGLRF) the chain is on the periplasmic side.

Belongs to the SecE/SEC61-gamma family. In terms of assembly, component of the Sec protein translocase complex. Heterotrimer consisting of SecY, SecE and SecG subunits. The heterotrimers can form oligomers, although 1 heterotrimer is thought to be able to translocate proteins. Interacts with the ribosome. Interacts with SecDF, and other proteins may be involved. Interacts with SecA.

It localises to the cell inner membrane. Functionally, essential subunit of the Sec protein translocation channel SecYEG. Clamps together the 2 halves of SecY. May contact the channel plug during translocation. The sequence is that of Protein translocase subunit SecE from Escherichia coli O157:H7.